Here is a 629-residue protein sequence, read N- to C-terminus: Phosphomethylpyrimidine synthase (629 aa).

The disordered stretch occupies residues 1 to 20; that stretch reads MSTTLKNAAHLSESAQVDSG. Substrate contacts are provided by residues Asn233, Met262, Tyr291, His327, 347 to 349, 388 to 391, and Glu427; these read SRG and DGLR. Residue His431 coordinates Zn(2+). Tyr454 is a substrate binding site. His495 contacts Zn(2+). Cys575, Cys578, and Cys583 together coordinate [4Fe-4S] cluster.

It belongs to the ThiC family. As to quaternary structure, homodimer. The cofactor is [4Fe-4S] cluster.

It catalyses the reaction 5-amino-1-(5-phospho-beta-D-ribosyl)imidazole + S-adenosyl-L-methionine = 4-amino-2-methyl-5-(phosphooxymethyl)pyrimidine + CO + 5'-deoxyadenosine + formate + L-methionine + 3 H(+). Its pathway is cofactor biosynthesis; thiamine diphosphate biosynthesis. Catalyzes the synthesis of the hydroxymethylpyrimidine phosphate (HMP-P) moiety of thiamine from aminoimidazole ribotide (AIR) in a radical S-adenosyl-L-methionine (SAM)-dependent reaction. This chain is Phosphomethylpyrimidine synthase, found in Pseudomonas savastanoi pv. phaseolicola (strain 1448A / Race 6) (Pseudomonas syringae pv. phaseolicola (strain 1448A / Race 6)).